Here is an 819-residue protein sequence, read N- to C-terminus: NEDD4-binding protein 1 (819 aa).

The span at 1–13 (MASGSVQSSSGNG) shows a compositional bias: polar residues. The interval 1 to 20 (MASGSVQSSSGNGRRQAAVV) is disordered. The KH-like domain maps to 80 to 164 (KQAVRRAKEY…VQQFIALFKD (85 aa)). A compositionally biased stretch (basic and acidic residues) spans 226–241 (DDKAECKVNQKDEVSR). Disordered regions lie at residues 226–247 (DDKA…AGTP) and 666–736 (KLDD…MAPR). Positions 517-669 (LKHIIIDGSN…LGRYGPKLDD (153 aa)) constitute an RNase NYN domain. The span at 673–689 (KQPNNRTVHSSFPSSNE) shows a compositional bias: polar residues. The interval 772 to 819 (RSPSETMQLKEALLKIFPEADQRHKINEILTAHPFMRDLNALSAMVLD) is coCUN.

The protein belongs to the N4BP1 family.

It is found in the cytoplasm. The protein resides in the cytosol. Its subcellular location is the nucleus. The protein localises to the nucleolus. It localises to the PML body. Its function is as follows. Potent suppressor of cytokine production that acts as a regulator of innate immune signaling and inflammation. Acts as a key negative regulator of select cytokine and chemokine responses elicited by TRIF-independent Toll-like receptors (TLRs), thereby limiting inflammatory cytokine responses to minor insults. Has ribonuclease activity. The protein is NEDD4-binding protein 1 of Xenopus tropicalis (Western clawed frog).